The primary structure comprises 299 residues: GTPase Era (299 aa).

Residues 5-172 form the Era-type G domain; that stretch reads KSGFVSIIGR…IDVLKTYLPE (168 aa). Positions 13–20 are G1; it reads GRPNVGKS. 13–20 contacts GTP; it reads GRPNVGKS. A G2 region spans residues 39-43; the sequence is QTTRN. A G3 region spans residues 60–63; that stretch reads DTPG. GTP is bound by residues 60–64 and 122–125; these read DTPGI and NKID. A G4 region spans residues 122-125; it reads NKID. Residues 151–153 are G5; it reads ISA. Residues 203–280 form the KH type-2 domain; sequence TSEEIPHAIG…YLELWVKVQR (78 aa).

The protein belongs to the TRAFAC class TrmE-Era-EngA-EngB-Septin-like GTPase superfamily. Era GTPase family. Monomer.

Its subcellular location is the cytoplasm. The protein localises to the cell membrane. Functionally, an essential GTPase that binds both GDP and GTP, with rapid nucleotide exchange. Plays a role in 16S rRNA processing and 30S ribosomal subunit biogenesis and possibly also in cell cycle regulation and energy metabolism. This is GTPase Era from Staphylococcus aureus (strain bovine RF122 / ET3-1).